We begin with the raw amino-acid sequence, 477 residues long: MATSALRGLAVAGGGESSESEDDGWEIGYLDRTSQKLKGQMLPIEEKKEKFKKALTTGDVSLVQELLDSGIISVDATFRYGWTPLMYAASVANAELVRVLLDRGANASFEKDKQTILITACSAHGSEEQILKCVELLLSRNADPNVACRRLMTPIMYAARDGHTQVVALLVASGAEVNTQDENGYTALTWAARQGHKSIVLKLLELGANKMLQTKDGKLPSEIAKRNKHHEIFNLLSFTLNPLEGKLQQLTKEETICKILTTDSDRENDHIFSSYAEFGDLEVFLHGLGLEHMTDLLKERDITLRQLLTMREDEFTKNGFASKDQQKILAALKELEVEEIQFGELSEEAKLEISGDEFLNFLLKLNKQCGHLITAVQNIITELPVNSQKIALEWASPQNFTSVCEELVNNVEDLSEEVCNLKDLIQKLQNERENDPTHIPLREEVSTWNSRILKRTAITVCGFGFLLFICKITFQRK.

The interval 1–24 is disordered; that stretch reads MATSALRGLAVAGGGESSESEDDG. Phosphoserine occurs at positions 17, 18, and 20. 6 ANK repeats span residues 46–76, 80–109, 112–146, 150–179, 183–212, and 216–245; these read EKKE…SVDA, YGWT…NASF, DKQT…DPNV, RLMT…EVNT, NGYT…NKML, and DGKL…PLEG. The 63-residue stretch at 274–336 folds into the SAM domain; sequence SYAEFGDLEV…KILAALKELE (63 aa).

In terms of assembly, interacts with DDX4, PIWIL1, RANBP9 and TDRD1.

Its subcellular location is the cytoplasm. Functionally, plays a central role during spermatogenesis by repressing transposable elements and preventing their mobilization, which is essential for the germline integrity. Acts via the piRNA metabolic process, which mediates the repression of transposable elements during meiosis by forming complexes composed of piRNAs and Piwi proteins and governs the methylation and subsequent repression of transposons. Its association with pi-bodies suggests a participation in the primary piRNAs metabolic process. Required prior to the pachytene stage to facilitate the production of multiple types of piRNAs, including those associated with repeats involved in the regulation of retrotransposons. May act by mediating protein-protein interactions during germ cell maturation. The chain is Ankyrin repeat, SAM and basic leucine zipper domain-containing protein 1 (ASZ1) from Saimiri boliviensis boliviensis (Bolivian squirrel monkey).